An 85-amino-acid polypeptide reads, in one-letter code: Sec-independent protein translocase protein TatA (85 aa).

The helical transmembrane segment at 7–27 threads the bilayer; the sequence is VFGSLGWTEILLILFIALLLF. The tract at residues 50 to 85 is disordered; it reads LTGESDDSSQQISQEQERSVPKEETKTSKSKKSKSA. Basic and acidic residues predominate over residues 64-76; it reads EQERSVPKEETKT.

This sequence belongs to the TatA/E family. As to quaternary structure, forms a complex with TatC.

The protein localises to the cell inner membrane. In terms of biological role, part of the twin-arginine translocation (Tat) system that transports large folded proteins containing a characteristic twin-arginine motif in their signal peptide across membranes. TatA could form the protein-conducting channel of the Tat system. This Leptospira interrogans serogroup Icterohaemorrhagiae serovar Lai (strain 56601) protein is Sec-independent protein translocase protein TatA.